The following is a 430-amino-acid chain: ATP-dependent protease ATPase subunit HslU (430 aa).

ATP contacts are provided by residues Val18, 60-65 (GVGKTE), Asp243, Glu308, and Arg380.

Belongs to the ClpX chaperone family. HslU subfamily. A double ring-shaped homohexamer of HslV is capped on each side by a ring-shaped HslU homohexamer. The assembly of the HslU/HslV complex is dependent on binding of ATP.

The protein resides in the cytoplasm. In terms of biological role, ATPase subunit of a proteasome-like degradation complex; this subunit has chaperone activity. The binding of ATP and its subsequent hydrolysis by HslU are essential for unfolding of protein substrates subsequently hydrolyzed by HslV. HslU recognizes the N-terminal part of its protein substrates and unfolds these before they are guided to HslV for hydrolysis. The polypeptide is ATP-dependent protease ATPase subunit HslU (Caulobacter vibrioides (strain ATCC 19089 / CIP 103742 / CB 15) (Caulobacter crescentus)).